The chain runs to 161 residues: MSIVTKSIVNADAEARYLSPGELDRIKSFVLSGQRRLRIAQILTDNRERIVKQGGQQLFQKRPDVVSPGGNAYGEEMTATCLRDLDYYLRLVTYGIVAGDVTPIEEIGLVGVKEMYNSLGTPISGVAEGVKCMKSVACSLLAGEDSAEAGFYFDYTLGAMQ.

N4-methylasparagine is present on Asn-71. Cys-81 contacts (2R,3E)-phycocyanobilin.

The protein belongs to the phycobiliprotein family. Heterodimer of an alpha and a beta chain. In terms of processing, contains one covalently linked phycocyanobilin chromophore.

Its subcellular location is the plastid. It localises to the chloroplast thylakoid membrane. Functionally, light-harvesting photosynthetic bile pigment-protein from the phycobiliprotein complex. Allophycocyanin has a maximum absorption at approximately 650 nanometers. The protein is Allophycocyanin alpha chain (apcA) of Porphyra purpurea (Red seaweed).